A 673-amino-acid polypeptide reads, in one-letter code: MEEPRRLGGRYELGPVLGRGGMAEVYHAHDTRLGRQVAVKTLRADLARDPSFQARFRREAQSAASLNHPAIVAVYDTGEDYIDNVSIPYIVMEYVDGSTLRELLHSGRKLLPERTLEMTIGILQALEYSHRAGIVHRDIKPANVMLTRNGQVKVMDFGIARAMGDSGMTMTQTAAVIGTAQYLSPEQAKGEQVDARSDLYSTGCLLYELLTVRPPFVGDSPVAVAYQHVREEPQAPSVFDPEITPEMDAIVLKALVKDPDYRYQSADEMRVDIEACLDGQPVGATAAMGAMAAGGYGAYPDDQPTTALRSDGGGGATTMLPPMNPDDGGYGYDERPDRRRQQPRKKNTSTIFLVLAGVLVLVGAILIGKYAFSGDGGPGNDKVPVPAFIGLSKADAQQQADNIDLVLTFKQQECEDQPKGNICAQDPKQGTDVDKESTVNLVVSTGAPKVAVPNVIDKNIDEAKKQLEDKGFEVETKQTESSQDEGTILSQNPDPGKELEKGSTVTLEVAKAEEKATVPDVVGRTCDEAKAQVESGGDLTAVCTDQPTNDPNQVGKVISTTPQSSTQVDPGSKVTIVVGKAVEKTKVPEVRGKTLAEARQILQQSGFTNVQVAQGSPGDDNAKVFASNPQPGSEVDDPAATPITLMTVPGDGGNGNGGNGNGGAIAGLPGFGD.

One can recognise a Protein kinase domain in the interval Tyr11–Leu277. Residues Leu17–Val25 and Lys40 contribute to the ATP site. Asp138 (proton acceptor) is an active-site residue. The tract at residues Asp302 to Lys345 is disordered. PASTA domains follow at residues Gly379 to Thr445, Gly446 to Lys511, Ala512 to Lys580, and Ala581 to Pro649. The disordered stretch occupies residues Phe472–Glu500. A compositionally biased stretch (polar residues) spans Thr479–Pro493. Disordered stretches follow at residues Ala613–Thr641 and Gly653–Asp673.

It belongs to the protein kinase superfamily. Ser/Thr protein kinase family.

It carries out the reaction L-seryl-[protein] + ATP = O-phospho-L-seryl-[protein] + ADP + H(+). It catalyses the reaction L-threonyl-[protein] + ATP = O-phospho-L-threonyl-[protein] + ADP + H(+). The polypeptide is Probable serine/threonine-protein kinase SCO3848 (Streptomyces coelicolor (strain ATCC BAA-471 / A3(2) / M145)).